The chain runs to 575 residues: 5-aminolevulinate synthase, mitochondrial (575 aa).

A mitochondrion-targeting transit peptide spans 1–55 (MESITRVSMSVCPFVKSSSAQALRQLSKNSALTSQARQCPFMGAALNAKESTRSY). Residues Arg124, Ser237, and Lys256 each contribute to the substrate site. 3 residues coordinate pyridoxal 5'-phosphate: Ser289, His317, and Thr361. Residue Lys364 is part of the active site. An N6-(pyridoxal phosphate)lysine modification is found at Lys364. Residues Thr393 and Thr394 each coordinate pyridoxal 5'-phosphate. A substrate-binding site is contributed by Thr479.

This sequence belongs to the class-II pyridoxal-phosphate-dependent aminotransferase family. Homodimer. Pyridoxal 5'-phosphate serves as cofactor.

The protein resides in the mitochondrion matrix. The enzyme catalyses succinyl-CoA + glycine + H(+) = 5-aminolevulinate + CO2 + CoA. It functions in the pathway porphyrin-containing compound metabolism; protoporphyrin-IX biosynthesis; 5-aminolevulinate from glycine: step 1/1. Catalyzes the synthesis of 5-aminolevulinate (ALA) from succinyl-CoA and glycine, the first and rate-limiting step in heme biosynthesis. The polypeptide is 5-aminolevulinate synthase, mitochondrial (HEM1) (Debaryomyces hansenii (strain ATCC 36239 / CBS 767 / BCRC 21394 / JCM 1990 / NBRC 0083 / IGC 2968) (Yeast)).